Reading from the N-terminus, the 129-residue chain is MHDPIADMLTRIRNGQQAKHQQVTLVSSKLKEEIARVLKEEGYIQDFFTETLPNGLKSITLKLKYYHGRPVIEFIKRISRPGLRVYKSYKDLHSIPGFGVAILSTSKGIMTHVSAKVKGVGGEVICEVA.

It belongs to the universal ribosomal protein uS8 family. As to quaternary structure, part of the 30S ribosomal subunit. Contacts proteins S5 and S12.

Functionally, one of the primary rRNA binding proteins, it binds directly to 16S rRNA central domain where it helps coordinate assembly of the platform of the 30S subunit. This Legionella pneumophila (strain Corby) protein is Small ribosomal subunit protein uS8.